The primary structure comprises 236 residues: UPF0257 lipoprotein YnfC (236 aa).

An N-terminal signal peptide occupies residues Met-1 to Gly-16. A lipid anchor (N-palmitoyl cysteine) is attached at Cys-17. Residue Cys-17 is the site of S-diacylglycerol cysteine attachment.

Belongs to the UPF0257 family.

The protein resides in the cell membrane. This is UPF0257 lipoprotein YnfC from Salmonella paratyphi C (strain RKS4594).